The primary structure comprises 227 residues: 2-C-methyl-D-erythritol 4-phosphate cytidylyltransferase (227 aa).

This sequence belongs to the IspD/TarI cytidylyltransferase family. IspD subfamily.

It carries out the reaction 2-C-methyl-D-erythritol 4-phosphate + CTP + H(+) = 4-CDP-2-C-methyl-D-erythritol + diphosphate. It functions in the pathway isoprenoid biosynthesis; isopentenyl diphosphate biosynthesis via DXP pathway; isopentenyl diphosphate from 1-deoxy-D-xylulose 5-phosphate: step 2/6. Its function is as follows. Catalyzes the formation of 4-diphosphocytidyl-2-C-methyl-D-erythritol from CTP and 2-C-methyl-D-erythritol 4-phosphate (MEP). The polypeptide is 2-C-methyl-D-erythritol 4-phosphate cytidylyltransferase (Deinococcus geothermalis (strain DSM 11300 / CIP 105573 / AG-3a)).